The primary structure comprises 815 residues: DNA topoisomerase 1 (815 aa).

The 117-residue stretch at 3–119 (KHLLIVESPA…QRIVFTEITP (117 aa)) folds into the Toprim domain. Positions 9 and 82 each coordinate Mg(2+). Residues 133–573 (ASDLVDAQQA…KFWVPFKELV (441 aa)) form the Topo IA-type catalytic domain. The interval 167–172 (SAGRVQ) is interaction with DNA. Residue tyrosine 308 is the O-(5'-phospho-DNA)-tyrosine intermediate of the active site. Residues 759–815 (TGKPARKNFSTKKTATKNETRKQTTKKRTTDAKATKKVSDKPVKKQIKKRIAPNITQ) form a disordered region. The segment covering 774 to 801 (TKNETRKQTTKKRTTDAKATKKVSDKPV) has biased composition (basic and acidic residues).

The protein belongs to the type IA topoisomerase family. In terms of assembly, monomer. The cofactor is Mg(2+).

The catalysed reaction is ATP-independent breakage of single-stranded DNA, followed by passage and rejoining.. Releases the supercoiling and torsional tension of DNA, which is introduced during the DNA replication and transcription, by transiently cleaving and rejoining one strand of the DNA duplex. Introduces a single-strand break via transesterification at a target site in duplex DNA. The scissile phosphodiester is attacked by the catalytic tyrosine of the enzyme, resulting in the formation of a DNA-(5'-phosphotyrosyl)-enzyme intermediate and the expulsion of a 3'-OH DNA strand. The free DNA strand then undergoes passage around the unbroken strand, thus removing DNA supercoils. Finally, in the religation step, the DNA 3'-OH attacks the covalent intermediate to expel the active-site tyrosine and restore the DNA phosphodiester backbone. This is DNA topoisomerase 1 from Xylella fastidiosa (strain Temecula1 / ATCC 700964).